Reading from the N-terminus, the 349-residue chain is N-acetyl-gamma-glutamyl-phosphate reductase (349 aa).

The active site involves cysteine 153.

It belongs to the NAGSA dehydrogenase family. Type 1 subfamily.

It is found in the cytoplasm. It carries out the reaction N-acetyl-L-glutamate 5-semialdehyde + phosphate + NADP(+) = N-acetyl-L-glutamyl 5-phosphate + NADPH + H(+). It participates in amino-acid biosynthesis; L-arginine biosynthesis; N(2)-acetyl-L-ornithine from L-glutamate: step 3/4. In terms of biological role, catalyzes the NADPH-dependent reduction of N-acetyl-5-glutamyl phosphate to yield N-acetyl-L-glutamate 5-semialdehyde. The sequence is that of N-acetyl-gamma-glutamyl-phosphate reductase from Magnetococcus marinus (strain ATCC BAA-1437 / JCM 17883 / MC-1).